A 185-amino-acid chain; its full sequence is Ribosome-recycling factor (185 aa).

It belongs to the RRF family.

It is found in the cytoplasm. Responsible for the release of ribosomes from messenger RNA at the termination of protein biosynthesis. May increase the efficiency of translation by recycling ribosomes from one round of translation to another. This chain is Ribosome-recycling factor, found in Corynebacterium urealyticum (strain ATCC 43042 / DSM 7109).